The primary structure comprises 410 residues: LL-diaminopimelate aminotransferase (410 aa).

Tyr-15 and Gly-42 together coordinate substrate. Pyridoxal 5'-phosphate is bound by residues Tyr-72, 108–109 (SK), Tyr-132, Asn-187, Tyr-218, and 246–248 (SFS). Substrate is bound by residues Lys-109, Tyr-132, and Asn-187. Residue Lys-249 is modified to N6-(pyridoxal phosphate)lysine. Pyridoxal 5'-phosphate contacts are provided by Arg-257 and Asn-292. Substrate-binding residues include Asn-292 and Arg-388.

The protein belongs to the class-I pyridoxal-phosphate-dependent aminotransferase family. LL-diaminopimelate aminotransferase subfamily. In terms of assembly, homodimer. Pyridoxal 5'-phosphate serves as cofactor.

The enzyme catalyses (2S,6S)-2,6-diaminopimelate + 2-oxoglutarate = (S)-2,3,4,5-tetrahydrodipicolinate + L-glutamate + H2O + H(+). Its pathway is amino-acid biosynthesis; L-lysine biosynthesis via DAP pathway; LL-2,6-diaminopimelate from (S)-tetrahydrodipicolinate (aminotransferase route): step 1/1. Functionally, involved in the synthesis of meso-diaminopimelate (m-DAP or DL-DAP), required for both lysine and peptidoglycan biosynthesis. Catalyzes the direct conversion of tetrahydrodipicolinate to LL-diaminopimelate. The protein is LL-diaminopimelate aminotransferase of Thermosynechococcus vestitus (strain NIES-2133 / IAM M-273 / BP-1).